The following is a 589-amino-acid chain: Protein NRT1/ PTR FAMILY 7.2 (589 aa).

2 helical membrane passes run 32–52 (WLTA…FFGV) and 78–98 (WTGT…SYWG). Thr102 carries the phosphothreonine modification. 10 consecutive transmembrane segments (helical) span residues 105–125 (IFQA…GALL), 147–167 (VLFY…QPNI), 187–207 (IAFF…SNTV), 217–237 (WPLG…LFLI), 343–363 (IWLC…LFVV), 377–397 (IPAS…IFAY), 423–443 (MGIG…VEIH), 464–484 (IFWQ…MYVG), 504–524 (LCMA…SIVM), and 548–568 (FYFL…ICAK).

Belongs to the major facilitator superfamily. Proton-dependent oligopeptide transporter (POT/PTR) (TC 2.A.17) family. Expressed in xylem parenchyma cells within the vasculature. Expressed in siliques and flowers. Higher expression in shoots than in roots.

Its subcellular location is the cell membrane. Its function is as follows. Low-affinity nitrate transporter. Involved in nitrate removal from xylem sap. Not involved in oligopeptides transport. This Arabidopsis thaliana (Mouse-ear cress) protein is Protein NRT1/ PTR FAMILY 7.2 (NPF7.2).